A 288-amino-acid chain; its full sequence is Mortality factor 4-like protein 2 (288 aa).

Positions 1-15 (MSSRKQASQTRGQQS) are enriched in polar residues. The segment at 1–115 (MSSRKQASQT…DPTVESEEAF (115 aa)) is disordered. Serine 71 is modified (phosphoserine). In terms of domain architecture, MRG spans 117-288 (SRMEVKVKIP…ASADYHRKAL (172 aa)).

Component of the NuA4 histone acetyltransferase complex which contains the catalytic subunit KAT5/TIP60 and the subunits EP400, TRRAP/PAF400, BRD8/SMAP, EPC1, DMAP1/DNMAP1, RUVBL1/TIP49, RUVBL2, ING3, actin, ACTL6A/BAF53A, MORF4L1/MRG15, MORF4L2/MRGX, MRGBP, YEATS4/GAS41 and VPS72/YL1. The NuA4 complex interacts with MYC and the adenovirus E1A protein. MORF4L1 may also participate in the formation of NuA4 related complexes which lack the KAT5/TIP60 catalytic subunit, but which include the SWI/SNF related protein SRCAP. Component of the MSIN3A histone deacetylase complex, which includes SIN3A, HDAC2, ARID4B, MORF4L1, RBBP4/RbAp48, and RBBP7/RbAp46. Interacts with MRFAP1 and RB1. May also interact with one or more as yet undefined members of the TLE (transducin-like enhancer of split) family of transcriptional repressors.

The protein localises to the nucleus. In terms of biological role, component of the NuA4 histone acetyltransferase complex which is involved in transcriptional activation of select genes principally by acetylation of nucleosomal histone H4 and H2A. This modification may both alter nucleosome - DNA interactions and promote interaction of the modified histones with other proteins which positively regulate transcription. This complex may be required for the activation of transcriptional programs associated with oncogene and proto-oncogene mediated growth induction, tumor suppressor mediated growth arrest and replicative senescence, apoptosis, and DNA repair. The NuA4 complex ATPase and helicase activities seem to be, at least in part, contributed by the association of RUVBL1 and RUVBL2 with EP400. NuA4 may also play a direct role in DNA repair when directly recruited to sites of DNA damage. Also a component of the MSIN3A complex which acts to repress transcription by deacetylation of nucleosomal histones. This chain is Mortality factor 4-like protein 2 (Morf4l2), found in Rattus norvegicus (Rat).